We begin with the raw amino-acid sequence, 67 residues long: Small ribosomal subunit protein eS17 (67 aa).

This sequence belongs to the eukaryotic ribosomal protein eS17 family.

This Thermococcus gammatolerans (strain DSM 15229 / JCM 11827 / EJ3) protein is Small ribosomal subunit protein eS17.